A 580-amino-acid chain; its full sequence is Phosphatase and actin regulator 1 (580 aa).

A phosphoserine mark is found at Ser67 and Ser78. At Thr104 the chain carries Phosphothreonine. Residues 108-129 (RRRSKFANLGRIFKPWKWRKKK) carry the Nuclear localization signal motif. The RPEL 1 repeat unit spans residues 138–163 (AALERKISMRQSREELIKRGVLKEIY). 2 disordered regions span residues 331 to 355 (EQRV…TKAG) and 376 to 410 (KENV…SSLY). Polar residues predominate over residues 335–345 (PCSTSYHSSGL). The span at 395 to 407 (EEEEEEEDEDDDS) shows a compositional bias: acidic residues. RPEL repeat units lie at residues 422-447 (DSLA…PRQT), 460-484 (TKLT…LKPR), and 498-523 (RRLT…IRFS). The tract at residues 462 to 494 (LTRRLSQRPTAEELEQRNILKPRNEQEEQEEKR) is disordered. Position 467 is a phosphoserine (Ser467). Over residues 471–494 (TAEELEQRNILKPRNEQEEQEEKR) the composition is skewed to basic and acidic residues. The residue at position 505 (Ser505) is a Phosphoserine.

It belongs to the phosphatase and actin regulator family. Interacts (via RPEL repeats) with ACTA1 and PPP1CA; ACTA1 and PPP1CA compete for the same binding site. Detected in umbilical vein endothelial cells.

It is found in the cytoplasm. The protein localises to the synapse. Its subcellular location is the nucleus. Its function is as follows. Binds actin monomers (G actin) and plays a role in multiple processes including the regulation of actin cytoskeleton dynamics, actin stress fibers formation, cell motility and survival, formation of tubules by endothelial cells, and regulation of PPP1CA activity. Involved in the regulation of cortical neuron migration and dendrite arborization. The sequence is that of Phosphatase and actin regulator 1 (PHACTR1) from Homo sapiens (Human).